Reading from the N-terminus, the 121-residue chain is Large ribosomal subunit protein bL12 (121 aa).

It belongs to the bacterial ribosomal protein bL12 family. Homodimer. Part of the ribosomal stalk of the 50S ribosomal subunit. Forms a multimeric L10(L12)X complex, where L10 forms an elongated spine to which 2 to 4 L12 dimers bind in a sequential fashion. Binds GTP-bound translation factors.

Its function is as follows. Forms part of the ribosomal stalk which helps the ribosome interact with GTP-bound translation factors. Is thus essential for accurate translation. This chain is Large ribosomal subunit protein bL12, found in Serratia proteamaculans (strain 568).